The sequence spans 375 residues: tRNA-specific 2-thiouridylase MnmA (375 aa).

ATP is bound by residues 8–15 (GLSGGVDS) and Met-34. Residues 104 to 106 (NPD) are interaction with target base in tRNA. The active-site Nucleophile is the Cys-109. Cys-109 and Cys-208 are disulfide-bonded. Gly-134 provides a ligand contact to ATP. The segment at 158–160 (KDQ) is interaction with tRNA. The Cysteine persulfide intermediate role is filled by Cys-208. The interaction with tRNA stretch occupies residues 321–322 (RY).

The protein belongs to the MnmA/TRMU family.

The protein resides in the cytoplasm. It carries out the reaction S-sulfanyl-L-cysteinyl-[protein] + uridine(34) in tRNA + AH2 + ATP = 2-thiouridine(34) in tRNA + L-cysteinyl-[protein] + A + AMP + diphosphate + H(+). In terms of biological role, catalyzes the 2-thiolation of uridine at the wobble position (U34) of tRNA, leading to the formation of s(2)U34. The sequence is that of tRNA-specific 2-thiouridylase MnmA from Mycoplasma capricolum subsp. capricolum (strain California kid / ATCC 27343 / NCTC 10154).